The following is a 515-amino-acid chain: 2-isopropylmalate synthase (515 aa).

A Pyruvate carboxyltransferase domain is found at 4–266 (ISVFDTTLRD…ETGLILKEIK (263 aa)). Residues Asp-13, His-201, His-203, and Asn-237 each contribute to the Mn(2+) site. Positions 391 to 515 (ELQTLQVNYG…AEVYGSKVEV (125 aa)) are regulatory domain.

Belongs to the alpha-IPM synthase/homocitrate synthase family. LeuA type 1 subfamily. As to quaternary structure, homodimer. Mn(2+) serves as cofactor.

The protein resides in the cytoplasm. It carries out the reaction 3-methyl-2-oxobutanoate + acetyl-CoA + H2O = (2S)-2-isopropylmalate + CoA + H(+). Its pathway is amino-acid biosynthesis; L-leucine biosynthesis; L-leucine from 3-methyl-2-oxobutanoate: step 1/4. Catalyzes the condensation of the acetyl group of acetyl-CoA with 3-methyl-2-oxobutanoate (2-ketoisovalerate) to form 3-carboxy-3-hydroxy-4-methylpentanoate (2-isopropylmalate). This is 2-isopropylmalate synthase from Halalkalibacterium halodurans (strain ATCC BAA-125 / DSM 18197 / FERM 7344 / JCM 9153 / C-125) (Bacillus halodurans).